The following is a 504-amino-acid chain: Activin receptor type-1-like (504 aa).

The N-terminal stretch at 1–20 (MTLGIFRRVFLMLSVALGLT) is a signal peptide. The Extracellular segment spans residues 21–121 (KGDLVKPSRG…EEPEVDAHLP (101 aa)). An N-linked (GlcNAc...) asparagine glycan is attached at asparagine 34. Intrachain disulfides connect cysteine 35-cysteine 52, cysteine 37-cysteine 42, and cysteine 47-cysteine 70. Residues 74-77 (NQEL) form a mediates specificity for BMP ligand region. Cystine bridges form between cysteine 78/cysteine 90 and cysteine 91/cysteine 96. Residue asparagine 99 is glycosylated (N-linked (GlcNAc...) asparagine). Residues 122–142 (LILGPVLALLVLVALGTLGLW) form a helical membrane-spanning segment. At 143-504 (RVRRRQEKQR…QNPEKPKVIH (362 aa)) the chain is on the cytoplasmic side. Residues serine 156, serine 161, and serine 162 each carry the phosphoserine modification. Positions 173 to 202 (SMLGDFLVSDCTTGSGSGLPFLVQRTVARQ) constitute a GS domain. Residues 203 to 504 (VALVECVGKG…QNPEKPKVIH (302 aa)) enclose the Protein kinase domain. ATP is bound by residues 209-217 (VGKGRYGEV) and lysine 230. The active-site Proton acceptor is aspartate 331.

The protein belongs to the protein kinase superfamily. TKL Ser/Thr protein kinase family. TGFB receptor subfamily. As to quaternary structure, interacts with TSC22D1/TSC-22. Mg(2+) serves as cofactor. The cofactor is Mn(2+). As to expression, urogenital ridge, testis, ovary, brain and lung. In lung, found exclusively in pulmonary vessels of all sizes. Also expressed in aorta, vena cava and certain blood vessels of kidney, spleen, heart and intestine. For most blood vessels, a higher level of expression is found in endothelium than in adjacent smooth muscle.

The protein localises to the cell membrane. It carries out the reaction L-threonyl-[receptor-protein] + ATP = O-phospho-L-threonyl-[receptor-protein] + ADP + H(+). The enzyme catalyses L-seryl-[receptor-protein] + ATP = O-phospho-L-seryl-[receptor-protein] + ADP + H(+). Its function is as follows. Type I receptor for TGF-beta family ligands BMP9/GDF2 and BMP10 and important regulator of normal blood vessel development. On ligand binding, forms a receptor complex consisting of two type II and two type I transmembrane serine/threonine kinases. Type II receptors phosphorylate and activate type I receptors which autophosphorylate, then bind and activate SMAD transcriptional regulators. May bind activin as well. The chain is Activin receptor type-1-like (Acvrl1) from Rattus norvegicus (Rat).